Consider the following 431-residue polypeptide: MPVTIVLGGQWGDEGKGKITDALAATADIVVRPNGSTNAGHTVVTDEGVFKLHVIPSGILYPHCTCIIGAGVAVSPPDFLREIESLRERHPRLGQLYVSDRAHVIMPYHPLLDLYEERRRGAAGIGTTLRGNGPAFTDKIARRGIRIADLLPGSERSLRHKLETLLPEKNTLFIHLYGESPLDLDQLFEQARTWGEALAPYVIAAEVFVQDALDAGKSVIIEAAQGTMLDPDYGTYPYVTSSSPTAAGACQGAGVAPTQVDRIVGVFKAYTTRVGAGPFPTELTDETGQLIRERGREYGTTTGRPRRVGWFDAVAARYSARLNGMTEAALTKLDMLDPLPEVRICVGYRIDNQEVSAPPAQVERYAAVEPVYEVLPGWQCDTSQVTSFDDLPPEAQRYVARIEELIGVPITMIGVGPARRQILWRPAGALT.

Residues 12-18 (GDEGKGK) and 40-42 (GHT) contribute to the GTP site. Asp-13 functions as the Proton acceptor in the catalytic mechanism. 2 residues coordinate Mg(2+): Asp-13 and Gly-40. IMP is bound by residues 13 to 16 (DEGK), 38 to 41 (NAGH), Thr-128, Arg-142, Gln-225, Thr-240, and Arg-304. His-41 functions as the Proton donor in the catalytic mechanism. 300–306 (TTTGRPR) provides a ligand contact to substrate. GTP is bound by residues Arg-306, 332 to 334 (KLD), and 414 to 416 (GVG).

This sequence belongs to the adenylosuccinate synthetase family. In terms of assembly, homodimer. Mg(2+) is required as a cofactor.

Its subcellular location is the cytoplasm. The catalysed reaction is IMP + L-aspartate + GTP = N(6)-(1,2-dicarboxyethyl)-AMP + GDP + phosphate + 2 H(+). The protein operates within purine metabolism; AMP biosynthesis via de novo pathway; AMP from IMP: step 1/2. Plays an important role in the de novo pathway of purine nucleotide biosynthesis. Catalyzes the first committed step in the biosynthesis of AMP from IMP. This is Adenylosuccinate synthetase from Thermomicrobium roseum (strain ATCC 27502 / DSM 5159 / P-2).